A 316-amino-acid polypeptide reads, in one-letter code: Putative transketolase C-terminal section (316 aa).

Belongs to the transketolase family. Requires thiamine diphosphate as cofactor.

The catalysed reaction is D-sedoheptulose 7-phosphate + D-glyceraldehyde 3-phosphate = aldehydo-D-ribose 5-phosphate + D-xylulose 5-phosphate. The protein is Putative transketolase C-terminal section of Methanocaldococcus jannaschii (strain ATCC 43067 / DSM 2661 / JAL-1 / JCM 10045 / NBRC 100440) (Methanococcus jannaschii).